Consider the following 897-residue polypeptide: Translation initiation factor IF-2 (897 aa).

Positions 402 to 570 (NRAPIVTIMG…SILVQSEILE (169 aa)) constitute a tr-type G domain. A G1 region spans residues 411 to 418 (GHVDHGKT). 411 to 418 (GHVDHGKT) serves as a coordination point for GTP. Residues 436-440 (GITQN) form a G2 region. The segment at 458-461 (DTPG) is G3. Residues 458–462 (DTPGH) and 512–515 (NKID) contribute to the GTP site. The interval 512 to 515 (NKID) is G4. The G5 stretch occupies residues 548–550 (SAV).

It belongs to the TRAFAC class translation factor GTPase superfamily. Classic translation factor GTPase family. IF-2 subfamily.

It localises to the cytoplasm. Functionally, one of the essential components for the initiation of protein synthesis. Protects formylmethionyl-tRNA from spontaneous hydrolysis and promotes its binding to the 30S ribosomal subunits. Also involved in the hydrolysis of GTP during the formation of the 70S ribosomal complex. The polypeptide is Translation initiation factor IF-2 (Blochmanniella floridana).